Reading from the N-terminus, the 275-residue chain is NADH-quinone oxidoreductase subunit E 1 (275 aa).

Positions 99, 104, 140, and 144 each coordinate [2Fe-2S] cluster. Residues 200–275 (LQAPEPVEEK…DKSKPAKKPR (76 aa)) are disordered. The segment covering 206-221 (VEEKKSVRASKAKDEQ) has biased composition (basic and acidic residues). A compositionally biased stretch (polar residues) spans 231-242 (AKPSTATDVTNP). The segment covering 243–256 (TLKTPATARKAAAK) has biased composition (low complexity). Positions 258–269 (VKIEGETVDKSK) are enriched in basic and acidic residues.

It belongs to the complex I 24 kDa subunit family. The cofactor is [2Fe-2S] cluster.

It catalyses the reaction a quinone + NADH + 5 H(+)(in) = a quinol + NAD(+) + 4 H(+)(out). Functionally, NDH-1 shuttles electrons from NADH, via FMN and iron-sulfur (Fe-S) centers, to quinones in the respiratory chain. The immediate electron acceptor for the enzyme in this species is believed to be ubiquinone. Couples the redox reaction to proton translocation (for every two electrons transferred, four hydrogen ions are translocated across the cytoplasmic membrane), and thus conserves the redox energy in a proton gradient. The protein is NADH-quinone oxidoreductase subunit E 1 (nuoE1) of Rhizobium meliloti (strain 1021) (Ensifer meliloti).